Consider the following 139-residue polypeptide: MSSTATTKGGRGKPKASKSVSRSSKAGLQFPVGRIARFLKAGKYAERVGAGAPVYLSAVLEYLAAEVLELAGNAARDNKNNRIVPRHIQLAVRNDEELSKLLGSVTIANGGVLPNIHQTLLPKKVGKGKGEIGSASQEF.

The tract at residues 1–24 is disordered; that stretch reads MSSTATTKGGRGKPKASKSVSRSS. Phosphoserine; by ATM and ATR is present on S136. The short motif at 136 to 137 is the [ST]-Q motif element; it reads SQ.

The protein belongs to the histone H2A family. The nucleosome is a histone octamer containing two molecules each of H2A, H2B, H3 and H4 assembled in one H3-H4 heterotetramer and two H2A-H2B heterodimers. The octamer wraps approximately 147 bp of DNA. Interacts with numerous proteins required for DNA damage signaling and repair when phosphorylated on Ser-136. Post-translationally, phosphorylated on Ser-136 (to form gamma-H2AX) in response to DNA double strand breaks (DSBs) generated by exogenous genotoxic agents and by stalled replication forks, and may also occur during meiotic recombination events. Phosphorylation can extend up to several thousand nucleosomes from the actual site of the DSB and may mark the surrounding chromatin for recruitment of proteins required for DNA damage signaling and repair. Widespread phosphorylation may also serve to amplify the damage signal or aid repair of persistent lesions. Phosphorylation of Ser-136 in response to ionizing radiation is mediated by ATM while defects in DNA replication induce Ser-136 phosphorylation subsequent to activation of ATR. Dephosphorylation of Ser-136 by PP2A is required for DNA DSB repair.

The protein resides in the nucleus. It is found in the chromosome. Variant histone H2A which replaces conventional H2A in a subset of nucleosomes. Nucleosomes wrap and compact DNA into chromatin, limiting DNA accessibility to the cellular machineries which require DNA as a template. Histones thereby play a central role in transcription regulation, DNA repair, DNA replication and chromosomal stability. DNA accessibility is regulated via a complex set of post-translational modifications of histones, also called histone code, and nucleosome remodeling. Required for checkpoint-mediated arrest of cell cycle progression in response to low doses of ionizing radiation and for efficient repair of DNA double strand breaks (DSBs) specifically when modified by C-terminal phosphorylation. This is Histone H2AX (HIS2A) from Cicer arietinum (Chickpea).